Consider the following 193-residue polypeptide: Peptidyl-tRNA hydrolase (193 aa).

Tyr16 provides a ligand contact to tRNA. His21 (proton acceptor) is an active-site residue. Phe66, Asn68, and Asn114 together coordinate tRNA.

This sequence belongs to the PTH family. In terms of assembly, monomer.

It is found in the cytoplasm. The catalysed reaction is an N-acyl-L-alpha-aminoacyl-tRNA + H2O = an N-acyl-L-amino acid + a tRNA + H(+). In terms of biological role, hydrolyzes ribosome-free peptidyl-tRNAs (with 1 or more amino acids incorporated), which drop off the ribosome during protein synthesis, or as a result of ribosome stalling. Functionally, catalyzes the release of premature peptidyl moieties from peptidyl-tRNA molecules trapped in stalled 50S ribosomal subunits, and thus maintains levels of free tRNAs and 50S ribosomes. This is Peptidyl-tRNA hydrolase from Pelobacter propionicus (strain DSM 2379 / NBRC 103807 / OttBd1).